The chain runs to 180 residues: ATP synthase subunit delta (180 aa).

Belongs to the ATPase delta chain family. In terms of assembly, F-type ATPases have 2 components, F(1) - the catalytic core - and F(0) - the membrane proton channel. F(1) has five subunits: alpha(3), beta(3), gamma(1), delta(1), epsilon(1). CF(0) has four main subunits: a(1), b(1), b'(1) and c(10-14). The alpha and beta chains form an alternating ring which encloses part of the gamma chain. F(1) is attached to F(0) by a central stalk formed by the gamma and epsilon chains, while a peripheral stalk is formed by the delta, b and b' chains.

It is found in the cellular thylakoid membrane. Functionally, f(1)F(0) ATP synthase produces ATP from ADP in the presence of a proton or sodium gradient. F-type ATPases consist of two structural domains, F(1) containing the extramembraneous catalytic core and F(0) containing the membrane proton channel, linked together by a central stalk and a peripheral stalk. During catalysis, ATP synthesis in the catalytic domain of F(1) is coupled via a rotary mechanism of the central stalk subunits to proton translocation. This protein is part of the stalk that links CF(0) to CF(1). It either transmits conformational changes from CF(0) to CF(1) or is implicated in proton conduction. This chain is ATP synthase subunit delta, found in Prochlorococcus marinus (strain MIT 9515).